We begin with the raw amino-acid sequence, 250 residues long: 6-phosphogluconate dehydrogenase, decarboxylating (250 aa).

Positions 29 and 56 each coordinate substrate. The residue at position 77 (Lys77) is an N6-acetyllysine. The substrate site is built by Arg214 and His220. 245-248 serves as a coordination point for NADP(+); sequence SSSY.

The protein belongs to the 6-phosphogluconate dehydrogenase family. As to quaternary structure, homodimer.

The protein resides in the cytoplasm. The enzyme catalyses 6-phospho-D-gluconate + NADP(+) = D-ribulose 5-phosphate + CO2 + NADPH. Its pathway is carbohydrate degradation; pentose phosphate pathway; D-ribulose 5-phosphate from D-glucose 6-phosphate (oxidative stage): step 3/3. In terms of biological role, catalyzes the oxidative decarboxylation of 6-phosphogluconate to ribulose 5-phosphate and CO(2), with concomitant reduction of NADP to NADPH. The chain is 6-phosphogluconate dehydrogenase, decarboxylating (PGD) from Sus scrofa (Pig).